We begin with the raw amino-acid sequence, 206 residues long: MKHNNVIPNGHFKKHWQNYVKTWFNQPARKTRRRIARQKKAVKIFPRPTSGPLRPVVHGQTLKYNMKVRTGKGFTLEELKAAGIPKKLAPTIGIAVDHRRKNRSLEGLQTNVQRLKTYKTKLVIFPRRARKVKAGDSTPEELANATQVQGDYLPIVREKPTMELVKLTSEMKSFKAFDKIRLERTNKRHAGARAKRAAEAEKEEKK.

The segment at 185 to 206 (TNKRHAGARAKRAAEAEKEEKK) is disordered. The segment covering 186–195 (NKRHAGARAK) has biased composition (basic residues). Over residues 196–206 (RAAEAEKEEKK) the composition is skewed to basic and acidic residues.

Belongs to the eukaryotic ribosomal protein eL13 family.

It is found in the cytoplasm. In Arabidopsis thaliana (Mouse-ear cress), this protein is Large ribosomal subunit protein eL13z (RPL13B).